A 520-amino-acid polypeptide reads, in one-letter code: GMP synthase [glutamine-hydrolyzing] (520 aa).

In terms of domain architecture, Glutamine amidotransferase type-1 spans serine 9–aspartate 202. Cysteine 86 (nucleophile) is an active-site residue. Catalysis depends on residues histidine 176 and glutamate 178. Positions tryptophan 203–arginine 395 constitute a GMPS ATP-PPase domain. Serine 230–serine 236 provides a ligand contact to ATP.

As to quaternary structure, homodimer.

It carries out the reaction XMP + L-glutamine + ATP + H2O = GMP + L-glutamate + AMP + diphosphate + 2 H(+). It participates in purine metabolism; GMP biosynthesis; GMP from XMP (L-Gln route): step 1/1. In terms of biological role, catalyzes the synthesis of GMP from XMP. The sequence is that of GMP synthase [glutamine-hydrolyzing] from Rhizobium etli (strain ATCC 51251 / DSM 11541 / JCM 21823 / NBRC 15573 / CFN 42).